A 199-amino-acid chain; its full sequence is Nucleoside triphosphate pyrophosphatase (199 aa).

Residue D72 is the Proton acceptor of the active site.

Belongs to the Maf family. It depends on a divalent metal cation as a cofactor.

It is found in the cytoplasm. It catalyses the reaction a ribonucleoside 5'-triphosphate + H2O = a ribonucleoside 5'-phosphate + diphosphate + H(+). The enzyme catalyses a 2'-deoxyribonucleoside 5'-triphosphate + H2O = a 2'-deoxyribonucleoside 5'-phosphate + diphosphate + H(+). Its function is as follows. Nucleoside triphosphate pyrophosphatase. May have a dual role in cell division arrest and in preventing the incorporation of modified nucleotides into cellular nucleic acids. This Synechococcus elongatus (strain ATCC 33912 / PCC 7942 / FACHB-805) (Anacystis nidulans R2) protein is Nucleoside triphosphate pyrophosphatase.